Reading from the N-terminus, the 460-residue chain is Ammonium transporter Rh type B-B (460 aa).

Residues 1-10 lie on the Cytoplasmic side of the membrane; that stretch reads MTSYSTNMRI. The chain crosses the membrane as a helical span at residues 11–31; the sequence is KLPLFCLLLQFITIILFAVFV. Residues 32-62 lie on the Extracellular side of the membrane; it reads RYDHESDARGWHEELNNHSSSNADNDFYYRY. A glycan (N-linked (GlcNAc...) asparagine) is linked at Asn-48. The chain crosses the membrane as a helical span at residues 63–83; that stretch reads PSFQDVHVMIFIGFGFLMTFL. Topologically, residues 84–87 are cytoplasmic; it reads KRYG. A helical transmembrane segment spans residues 88–108; it reads FSSVAFNFLIAAFGLQWSTLI. At 109-125 the chain is on the extracellular side; the sequence is QGFFHGFHDGKIHVGIE. The helical transmembrane segment at 126–146 threads the bilayer; sequence SMINADFCTGAVLISFGAVLG. Topologically, residues 147 to 150 are cytoplasmic; that stretch reads KTSP. The chain crosses the membrane as a helical span at residues 151 to 171; sequence VQLIIMTLVEVTLFGINEYII. The Extracellular portion of the chain corresponds to 172 to 179; it reads LNIVGAKD. A helical membrane pass occupies residues 180 to 202; sequence AGGSMTIHTFGAYFGLIVSRVLY. The Cytoplasmic portion of the chain corresponds to 203–220; it reads REDLEKSRQREGSVYHSD. The helical transmembrane segment at 221 to 241 threads the bilayer; it reads LFAMIGTIYLWMFWPSFNSAV. Over 242–252 the chain is Extracellular; the sequence is TAHGDDQHRTV. Residues 253 to 273 form a helical membrane-spanning segment; that stretch reads MNTYYSLAACTLATFGFSALL. Residues 274 to 283 lie on the Cytoplasmic side of the membrane; sequence NGEGKLDMVH. Residues 284 to 304 form a helical membrane-spanning segment; it reads IQNAALAGGVAVGTSGEMMLT. Residue Pro-305 is a topological domain, extracellular. Residues 306–326 form a helical membrane-spanning segment; it reads FGAMIAGTLAGMISVLGYKYL. At 327-347 the chain is on the cytoplasmic side; sequence TPVLDSKLKIQDTCGVHNLHG. A helical membrane pass occupies residues 348-368; that stretch reads MPGILGAIIGAIVALFATADI. Residues 369–394 are Extracellular-facing; that stretch reads YGDGMGDVFPLISDGSRTAKQQSLYQ. A helical transmembrane segment spans residues 395 to 415; sequence FLALLVALGFAIIGGTVVGFI. Residues 416 to 460 lie on the Cytoplasmic side of the membrane; it reads LKLPIFGTPSDAECFEDAIYWEVPGGEGHQQLTVVINNEDPDTQA.

The protein belongs to the ammonium transporter (TC 2.A.49) family. Rh subfamily.

The protein resides in the basolateral cell membrane. It localises to the cytoplasmic vesicle membrane. Its function is as follows. Functions as a specific ammonium transporter. The protein is Ammonium transporter Rh type B-B (rhbg-b) of Xenopus laevis (African clawed frog).